A 602-amino-acid polypeptide reads, in one-letter code: Probable HECT-type ubiquitin ligase-interacting protein creD (602 aa).

Disordered regions lie at residues Glu375–Ser398 and Thr457–Pro499. Positions Pro463–Pro475 are enriched in low complexity. The span at Leu477–Ile492 shows a compositional bias: basic and acidic residues.

It belongs to the arrestin family. In terms of assembly, interacts with hulA.

Its function is as follows. Component of the regulatory network controlling carbon source utilization through ubiquitination and deubiquitination involving creA, creB, creC, creD and acrB. May be involved in signaling by recognizing appropriately phosphorylated substrates via its arrestin domains and then recruit a HECT-type ubiquitin ligase such as hulA, leading to ubiquitination of the substrate, providing a link between ubiquitination and phosphorylation in protein regulation and stability. The protein is Probable HECT-type ubiquitin ligase-interacting protein creD (creD) of Aspergillus clavatus (strain ATCC 1007 / CBS 513.65 / DSM 816 / NCTC 3887 / NRRL 1 / QM 1276 / 107).